The sequence spans 178 residues: Large ribosomal subunit protein uL6 (178 aa).

This sequence belongs to the universal ribosomal protein uL6 family. In terms of assembly, part of the 50S ribosomal subunit.

In terms of biological role, this protein binds to the 23S rRNA, and is important in its secondary structure. It is located near the subunit interface in the base of the L7/L12 stalk, and near the tRNA binding site of the peptidyltransferase center. This chain is Large ribosomal subunit protein uL6, found in Francisella tularensis subsp. holarctica (strain FTNF002-00 / FTA).